Here is a 292-residue protein sequence, read N- to C-terminus: UDP-3-O-acyl-N-acetylglucosamine deacetylase (292 aa).

Zn(2+) contacts are provided by His76, His232, and Asp236. His259 acts as the Proton donor in catalysis.

Belongs to the LpxC family. Zn(2+) is required as a cofactor.

The enzyme catalyses a UDP-3-O-[(3R)-3-hydroxyacyl]-N-acetyl-alpha-D-glucosamine + H2O = a UDP-3-O-[(3R)-3-hydroxyacyl]-alpha-D-glucosamine + acetate. Its pathway is glycolipid biosynthesis; lipid IV(A) biosynthesis; lipid IV(A) from (3R)-3-hydroxytetradecanoyl-[acyl-carrier-protein] and UDP-N-acetyl-alpha-D-glucosamine: step 2/6. In terms of biological role, catalyzes the hydrolysis of UDP-3-O-myristoyl-N-acetylglucosamine to form UDP-3-O-myristoylglucosamine and acetate, the committed step in lipid A biosynthesis. This chain is UDP-3-O-acyl-N-acetylglucosamine deacetylase, found in Thermodesulfovibrio yellowstonii (strain ATCC 51303 / DSM 11347 / YP87).